The sequence spans 96 residues: Small ribosomal subunit protein bS18 (96 aa).

It belongs to the bacterial ribosomal protein bS18 family. As to quaternary structure, part of the 30S ribosomal subunit. Forms a tight heterodimer with protein bS6.

Its function is as follows. Binds as a heterodimer with protein bS6 to the central domain of the 16S rRNA, where it helps stabilize the platform of the 30S subunit. This Borreliella afzelii (strain PKo) (Borrelia afzelii) protein is Small ribosomal subunit protein bS18.